Consider the following 555-residue polypeptide: Urocanate hydratase (555 aa).

NAD(+) is bound by residues glycine 52 to glycine 53, glutamine 130, glycine 176 to glycine 178, glutamate 196, arginine 201, asparagine 242 to alanine 243, glutamine 263 to histidine 267, tyrosine 273 to leucine 274, and tyrosine 322. Cysteine 410 is a catalytic residue. Glycine 492 provides a ligand contact to NAD(+).

Belongs to the urocanase family. It depends on NAD(+) as a cofactor.

It localises to the cytoplasm. It carries out the reaction 4-imidazolone-5-propanoate = trans-urocanate + H2O. The protein operates within amino-acid degradation; L-histidine degradation into L-glutamate; N-formimidoyl-L-glutamate from L-histidine: step 2/3. Catalyzes the conversion of urocanate to 4-imidazolone-5-propionate. This is Urocanate hydratase from Shewanella baltica (strain OS155 / ATCC BAA-1091).